The sequence spans 297 residues: Phosphoribosylaminoimidazole-succinocarboxamide synthase (297 aa).

It belongs to the SAICAR synthetase family.

The catalysed reaction is 5-amino-1-(5-phospho-D-ribosyl)imidazole-4-carboxylate + L-aspartate + ATP = (2S)-2-[5-amino-1-(5-phospho-beta-D-ribosyl)imidazole-4-carboxamido]succinate + ADP + phosphate + 2 H(+). The protein operates within purine metabolism; IMP biosynthesis via de novo pathway; 5-amino-1-(5-phospho-D-ribosyl)imidazole-4-carboxamide from 5-amino-1-(5-phospho-D-ribosyl)imidazole-4-carboxylate: step 1/2. This chain is Phosphoribosylaminoimidazole-succinocarboxamide synthase, found in Mycobacterium ulcerans (strain Agy99).